The primary structure comprises 271 residues: Tryptophan synthase alpha chain (271 aa).

Active-site proton acceptor residues include Glu49 and Asp60.

The protein belongs to the TrpA family. As to quaternary structure, tetramer of two alpha and two beta chains.

The enzyme catalyses (1S,2R)-1-C-(indol-3-yl)glycerol 3-phosphate + L-serine = D-glyceraldehyde 3-phosphate + L-tryptophan + H2O. It functions in the pathway amino-acid biosynthesis; L-tryptophan biosynthesis; L-tryptophan from chorismate: step 5/5. Its function is as follows. The alpha subunit is responsible for the aldol cleavage of indoleglycerol phosphate to indole and glyceraldehyde 3-phosphate. The chain is Tryptophan synthase alpha chain from Burkholderia thailandensis (strain ATCC 700388 / DSM 13276 / CCUG 48851 / CIP 106301 / E264).